The following is an 81-amino-acid chain: ATP synthase subunit c (81 aa).

The next 2 helical transmembrane spans lie at 5–25 (VAAA…IGPG) and 57–77 (LAFM…LLFA).

Belongs to the ATPase C chain family. As to quaternary structure, F-type ATPases have 2 components, F(1) - the catalytic core - and F(0) - the membrane proton channel. F(1) has five subunits: alpha(3), beta(3), gamma(1), delta(1), epsilon(1). F(0) has four main subunits: a(1), b(1), b'(1) and c(10-14). The alpha and beta chains form an alternating ring which encloses part of the gamma chain. F(1) is attached to F(0) by a central stalk formed by the gamma and epsilon chains, while a peripheral stalk is formed by the delta, b and b' chains.

Its subcellular location is the cellular thylakoid membrane. F(1)F(0) ATP synthase produces ATP from ADP in the presence of a proton or sodium gradient. F-type ATPases consist of two structural domains, F(1) containing the extramembraneous catalytic core and F(0) containing the membrane proton channel, linked together by a central stalk and a peripheral stalk. During catalysis, ATP synthesis in the catalytic domain of F(1) is coupled via a rotary mechanism of the central stalk subunits to proton translocation. In terms of biological role, key component of the F(0) channel; it plays a direct role in translocation across the membrane. A homomeric c-ring of between 10-14 subunits forms the central stalk rotor element with the F(1) delta and epsilon subunits. The polypeptide is ATP synthase subunit c (Microcystis aeruginosa (strain NIES-843 / IAM M-2473)).